A 199-amino-acid polypeptide reads, in one-letter code: Recombination protein RecR (199 aa).

Residues C57 to C72 form a C4-type zinc finger. The 96-residue stretch at S81–P176 folds into the Toprim domain.

This sequence belongs to the RecR family.

Functionally, may play a role in DNA repair. It seems to be involved in an RecBC-independent recombinational process of DNA repair. It may act with RecF and RecO. The chain is Recombination protein RecR from Shewanella sp. (strain ANA-3).